A 256-amino-acid polypeptide reads, in one-letter code: Type III pantothenate kinase 1 (256 aa).

Position 6–13 (6–13 (DIGNSHIF)) interacts with ATP. Residue 107-110 (GADR) coordinates substrate. Catalysis depends on Asp109, which acts as the Proton acceptor. Asp130 serves as a coordination point for K(+). Residue Thr133 coordinates ATP. A substrate-binding site is contributed by Thr185.

The protein belongs to the type III pantothenate kinase family. In terms of assembly, homodimer. NH4(+) is required as a cofactor. Requires K(+) as cofactor.

The protein resides in the cytoplasm. It catalyses the reaction (R)-pantothenate + ATP = (R)-4'-phosphopantothenate + ADP + H(+). It participates in cofactor biosynthesis; coenzyme A biosynthesis; CoA from (R)-pantothenate: step 1/5. In terms of biological role, catalyzes the phosphorylation of pantothenate (Pan), the first step in CoA biosynthesis. This is Type III pantothenate kinase 1 from Francisella tularensis subsp. holarctica (strain LVS).